The chain runs to 153 residues: Facilitator of iron transport 2 (153 aa).

Positions 1–18 are cleaved as a signal peptide; it reads MKFSTIFGATTVMTAVSA. The disordered stretch occupies residues 73–98; sequence TEGPDTTSEKSTTKTLTLTNGSGSST. Residues 85 to 98 are compositionally biased toward low complexity; that stretch reads TKTLTLTNGSGSST. An N-linked (GlcNAc...) asparagine glycan is attached at Asn-92. Gly-130 carries the GPI-anchor amidated glycine lipid modification. Residues 131–153 constitute a propeptide, removed in mature form; sequence AAPAAFQGASVGALALGLISYLL.

In terms of processing, the GPI-anchor is attached to the protein in the endoplasmic reticulum and serves to target the protein to the cell surface. There, the glucosamine-inositol phospholipid moiety is cleaved off and the GPI-modified mannoprotein is covalently attached via its lipidless GPI glycan remnant to the 1,6-beta-glucan of the outer cell wall layer.

Its subcellular location is the secreted. The protein resides in the cell wall. The protein localises to the membrane. Functionally, involved in the uptake of non-siderophore and siderophore sources of iron. Has a role in the retention of iron in the cell wall and periplasmic space. The protein is Facilitator of iron transport 2 (FIT2) of Saccharomyces cerevisiae (strain ATCC 204508 / S288c) (Baker's yeast).